Consider the following 433-residue polypeptide: MSAGTAKTPLSNSFFSASLADVDPELSRAVQQELGRQQHEIELIASENIVSRAVLEAQGSVLTNKYAEGYPGRRYYGGCEFVDIAENLAIERAKRLFGCDFANVQPNSGSQANQAVFMATMQPGDTFLGLDLAAGGHLTHGAPPNVSGKWFKPVSYTVRREDQRIDMEQVAKLAEEHKPKVIIAGGSGYPRHWDFAKFREIADSVGAVFFVDMAHFAGLVAGGVHPSPFPHAHVVTTTTHKTLRGPRGGMVLTNDEALAKKINSAVFPGLQGGPLMHVIAGKAVAFGEALSPDFKIYAKQVVENAKALADTIISGGFDITTGGTDNHLMLVDMRPKNLTGKAAEAALSRAGITCNKNGVPFDPQKPTVTSGIRLGTPAATSRGFGVAEFKKVGELIVTVLDGLARAGEAGDGAAEKKVLEEVHALTDRFPIYA.

Residues L132 and G136–L138 each bind (6S)-5,6,7,8-tetrahydrofolate. At K241 the chain carries N6-(pyridoxal phosphate)lysine.

Belongs to the SHMT family. Homodimer. It depends on pyridoxal 5'-phosphate as a cofactor.

It is found in the cytoplasm. It carries out the reaction (6R)-5,10-methylene-5,6,7,8-tetrahydrofolate + glycine + H2O = (6S)-5,6,7,8-tetrahydrofolate + L-serine. Its pathway is one-carbon metabolism; tetrahydrofolate interconversion. It participates in amino-acid biosynthesis; glycine biosynthesis; glycine from L-serine: step 1/1. Catalyzes the reversible interconversion of serine and glycine with tetrahydrofolate (THF) serving as the one-carbon carrier. This reaction serves as the major source of one-carbon groups required for the biosynthesis of purines, thymidylate, methionine, and other important biomolecules. Also exhibits THF-independent aldolase activity toward beta-hydroxyamino acids, producing glycine and aldehydes, via a retro-aldol mechanism. This chain is Serine hydroxymethyltransferase, found in Methylobacterium sp. (strain 4-46).